Reading from the N-terminus, the 223-residue chain is Cytotoxic T-lymphocyte protein 4 (223 aa).

Positions Met1–Ser35 are cleaved as a signal peptide. The region spanning Glu36–Asn145 is the Ig-like V-type domain. Residues Glu36–Asp161 are Extracellular-facing. The segment at Val46–Ser50 is homodimerization. 2 disulfide bridges follow: Cys58/Cys129 and Cys85/Cys103. Asn108 and Asn113 each carry an N-linked (GlcNAc...) asparagine glycan. An important for interaction with CD80 and CD86 region spans residues Met134–Tyr139. Asn145 carries an N-linked (GlcNAc...) asparagine glycan. Residues Tyr150–Glu155 are homodimerization. A helical transmembrane segment spans residues Phe162 to Ser182. Residues Ala183–Asn223 lie on the Cytoplasmic side of the membrane. Tyr201 is subject to Phosphotyrosine; by TXK and JAK2.

In terms of assembly, homodimer; disulfide-linked. Binds to CD80/B7-1 and CD86/B7.2. Interacts with ICOSLG. N-glycosylation is important for dimerization. In terms of processing, phosphorylation at Tyr-201 prevents binding to the AP-2 adapter complex, blocks endocytosis, and leads to retention of CTLA4 on the cell surface. Widely expressed with highest levels in lymphoid tissues.

It is found in the cell membrane. Its function is as follows. Inhibitory receptor acting as a major negative regulator of T-cell responses. The affinity of CTLA4 for its natural B7 family ligands, CD80 and CD86, is considerably stronger than the affinity of their cognate stimulatory coreceptor CD28. The chain is Cytotoxic T-lymphocyte protein 4 (Ctla4) from Mus musculus (Mouse).